The chain runs to 86 residues: Large ribosomal subunit protein uL23 (86 aa).

Belongs to the universal ribosomal protein uL23 family. As to quaternary structure, part of the 50S ribosomal subunit. Contacts protein L29.

Binds to 23S rRNA. One of the proteins that surrounds the polypeptide exit tunnel on the outside of the ribosome. The chain is Large ribosomal subunit protein uL23 from Pyrococcus furiosus (strain ATCC 43587 / DSM 3638 / JCM 8422 / Vc1).